A 223-amino-acid polypeptide reads, in one-letter code: Urease accessory protein UreF (223 aa).

It belongs to the UreF family. As to quaternary structure, ureD, UreF and UreG form a complex that acts as a GTP-hydrolysis-dependent molecular chaperone, activating the urease apoprotein by helping to assemble the nickel containing metallocenter of UreC. The UreE protein probably delivers the nickel.

The protein resides in the cytoplasm. Functionally, required for maturation of urease via the functional incorporation of the urease nickel metallocenter. In Rhizobium meliloti (strain 1021) (Ensifer meliloti), this protein is Urease accessory protein UreF.